A 971-amino-acid polypeptide reads, in one-letter code: Isoleucine--tRNA ligase (971 aa).

The 'HIGH' region motif lies at 64 to 74 (PYANGHIHIGH). E602 is an L-isoleucyl-5'-AMP binding site. Positions 643 to 647 (KMSKS) match the 'KMSKS' region motif. K646 contacts ATP.

This sequence belongs to the class-I aminoacyl-tRNA synthetase family. IleS type 1 subfamily. In terms of assembly, monomer.

It is found in the cytoplasm. It carries out the reaction tRNA(Ile) + L-isoleucine + ATP = L-isoleucyl-tRNA(Ile) + AMP + diphosphate. Functionally, catalyzes the attachment of isoleucine to tRNA(Ile). As IleRS can inadvertently accommodate and process structurally similar amino acids such as valine, to avoid such errors it has two additional distinct tRNA(Ile)-dependent editing activities. One activity is designated as 'pretransfer' editing and involves the hydrolysis of activated Val-AMP. The other activity is designated 'posttransfer' editing and involves deacylation of mischarged Val-tRNA(Ile). In Bartonella quintana (strain Toulouse) (Rochalimaea quintana), this protein is Isoleucine--tRNA ligase.